The sequence spans 151 residues: Inactive oocyte-specific homeobox protein 2 (151 aa).

Residues 1–97 (MAEGPSLHPK…PMASRKFRKE (97 aa)) form a disordered region. The segment covering 37 to 54 (MRQSPLVTPGSTTKSSLS) has biased composition (polar residues).

It belongs to the paired homeobox family. Obox subfamily. Specifically expressed in oocytes and early embryos.

Its function is as follows. In contrast to other Obox family proteins, displays a truncated homeobox domain and does not bind DNA. This is Inactive oocyte-specific homeobox protein 2 from Mus musculus (Mouse).